A 154-amino-acid polypeptide reads, in one-letter code: 3-hydroxyacyl-[acyl-carrier-protein] dehydratase FabZ (154 aa).

Residue His59 is part of the active site.

This sequence belongs to the thioester dehydratase family. FabZ subfamily.

The protein localises to the cytoplasm. The enzyme catalyses a (3R)-hydroxyacyl-[ACP] = a (2E)-enoyl-[ACP] + H2O. In terms of biological role, involved in unsaturated fatty acids biosynthesis. Catalyzes the dehydration of short chain beta-hydroxyacyl-ACPs and long chain saturated and unsaturated beta-hydroxyacyl-ACPs. The protein is 3-hydroxyacyl-[acyl-carrier-protein] dehydratase FabZ of Bartonella bacilliformis (strain ATCC 35685 / KC583 / Herrer 020/F12,63).